Reading from the N-terminus, the 409-residue chain is Multidrug transporter MdfA (409 aa).

At 1 to 15 (MQTSFSPATRLGRRA) the chain is on the cytoplasmic side. The helical transmembrane segment at 16–36 (LLFPLCLVLFEFAAYIANDMI) threads the bilayer. Residues 37–52 (QPGMLAVVAEFNASVE) lie on the Periplasmic side of the membrane. A helical membrane pass occupies residues 53–73 (WVPTSMTAYLAGGMFLQWLLG). The Cytoplasmic segment spans residues 74–82 (PLSDRRGRR). The helical transmembrane segment at 83–103 (PVMLAGVAFFVVTCLAILLVN) threads the bilayer. Over 104 to 107 (SIEQ) the chain is Periplasmic. The chain crosses the membrane as a helical span at residues 108–128 (FIAMRFLQGIGLCFIGAVGYA). Residues 129 to 144 (TIQESFEEAVCIKITA) are Cytoplasmic-facing. A helical transmembrane segment spans residues 145–165 (LMANVALIAPLLGPLAGAALI). Residues 166–168 (HVA) lie on the Periplasmic side of the membrane. A helical transmembrane segment spans residues 169–189 (PWQTMFVLFAVLGAISFAGLW). Over 190–226 (RAMPETASLKGEKLSVANMWRDYKQVLANRRFLCGSL) the chain is Cytoplasmic. A helical transmembrane segment spans residues 227–247 (ALGFASLPLLAWIAQSPVILI). At 248-254 (SGEQLST) the chain is on the periplasmic side. Residues 255–275 (FEYGILQVPIFGALIIGNLTL) traverse the membrane as a helical segment. Residues 276–286 (ARLSGKTSIPQ) are Cytoplasmic-facing. The helical transmembrane segment at 287–307 (LIRYGAGPMIVGLMIAAGSTL) threads the bilayer. Topologically, residues 308–314 (YSSHAYL) are periplasmic. Residues 315–335 (WMTAGLSLYAFGIGLANAGLV) form a helical membrane-spanning segment. The Cytoplasmic segment spans residues 336 to 347 (RLTLFASDISKG). A helical membrane pass occupies residues 348–368 (TVSAAMGMISMMIFTLGIELA). Residues 369–378 (KVAYLWGDSR) lie on the Periplasmic side of the membrane. The chain crosses the membrane as a helical span at residues 379–399 (GFNLFNLMSGLLWLGLVMVFI). At 400-409 (RRQPEAVATE) the chain is on the cytoplasmic side.

It belongs to the major facilitator superfamily. MdfA family. Monomer.

The protein localises to the cell inner membrane. In terms of biological role, efflux pump driven by the proton motive force. Confers resistance to a broad spectrum of chemically unrelated drugs. In Yersinia pestis (strain D182038), this protein is Multidrug transporter MdfA (mdfA).